A 702-amino-acid chain; its full sequence is Polyribonucleotide nucleotidyltransferase (702 aa).

Residues Asp485 and Asp491 each coordinate Mg(2+). The region spanning 552–612 is the KH domain; sequence PRTEIICIDP…EGVKKAISII (61 aa). The S1 motif domain occupies 622–690; the sequence is GEIYLGKVTK…NQGRINLSRK (69 aa).

Belongs to the polyribonucleotide nucleotidyltransferase family. Requires Mg(2+) as cofactor.

The protein resides in the cytoplasm. The catalysed reaction is RNA(n+1) + phosphate = RNA(n) + a ribonucleoside 5'-diphosphate. Its function is as follows. Involved in mRNA degradation. Catalyzes the phosphorolysis of single-stranded polyribonucleotides processively in the 3'- to 5'-direction. The sequence is that of Polyribonucleotide nucleotidyltransferase from Clostridium botulinum (strain ATCC 19397 / Type A).